A 532-amino-acid polypeptide reads, in one-letter code: Protoporphyrinogen oxidase (532 aa).

FAD-binding positions include 9 to 14 (GSGISG), Ile-289, and 511 to 513 (VGI).

This sequence belongs to the protoporphyrinogen/coproporphyrinogen oxidase family. Protoporphyrinogen oxidase subfamily. Requires FAD as cofactor.

It localises to the mitochondrion. The catalysed reaction is protoporphyrinogen IX + 3 O2 = protoporphyrin IX + 3 H2O2. It participates in porphyrin-containing compound metabolism; protoporphyrin-IX biosynthesis; protoporphyrin-IX from protoporphyrinogen-IX: step 1/1. In terms of biological role, catalyzes the 6-electron oxidation of protoporphyrinogen-IX to form protoporphyrin-IX. This chain is Protoporphyrinogen oxidase (ppox), found in Dictyostelium discoideum (Social amoeba).